We begin with the raw amino-acid sequence, 1183 residues long: DNA-directed RNA polymerase subunit beta (1183 aa).

This sequence belongs to the RNA polymerase beta chain family. The RNAP catalytic core consists of 2 alpha, 1 beta, 1 beta' and 1 omega subunit. When a sigma factor is associated with the core the holoenzyme is formed, which can initiate transcription.

The catalysed reaction is RNA(n) + a ribonucleoside 5'-triphosphate = RNA(n+1) + diphosphate. In terms of biological role, DNA-dependent RNA polymerase catalyzes the transcription of DNA into RNA using the four ribonucleoside triphosphates as substrates. This is DNA-directed RNA polymerase subunit beta from Staphylococcus aureus (strain Mu3 / ATCC 700698).